We begin with the raw amino-acid sequence, 564 residues long: Threonine--tRNA ligase (564 aa).

A catalytic region spans residues 167 to 464 (DHRAIGKRLE…LLEKTHGNLP (298 aa)). Zn(2+)-binding residues include cysteine 260, histidine 311, and histidine 441.

Belongs to the class-II aminoacyl-tRNA synthetase family. Homodimer. The cofactor is Zn(2+).

The protein resides in the cytoplasm. The enzyme catalyses tRNA(Thr) + L-threonine + ATP = L-threonyl-tRNA(Thr) + AMP + diphosphate + H(+). Functionally, catalyzes the attachment of threonine to tRNA(Thr) in a two-step reaction: L-threonine is first activated by ATP to form Thr-AMP and then transferred to the acceptor end of tRNA(Thr). Also edits incorrectly charged L-seryl-tRNA(Thr). This Mycoplasma pneumoniae (strain ATCC 29342 / M129 / Subtype 1) (Mycoplasmoides pneumoniae) protein is Threonine--tRNA ligase.